The primary structure comprises 34 residues: Calcitonin-like peptide 1 (34 aa).

A disulfide bond links cysteine 2 and cysteine 7. At proline 34 the chain carries Proline amide.

This is Calcitonin-like peptide 1 from Odorrana schmackeri (Schmacker's frog).